Consider the following 232-residue polypeptide: Large ribosomal subunit protein uL1 (232 aa).

The protein belongs to the universal ribosomal protein uL1 family. In terms of assembly, part of the 50S ribosomal subunit.

Binds directly to 23S rRNA. The L1 stalk is quite mobile in the ribosome, and is involved in E site tRNA release. In terms of biological role, protein L1 is also a translational repressor protein, it controls the translation of the L11 operon by binding to its mRNA. The sequence is that of Large ribosomal subunit protein uL1 from Mesorhizobium japonicum (strain LMG 29417 / CECT 9101 / MAFF 303099) (Mesorhizobium loti (strain MAFF 303099)).